A 152-amino-acid chain; its full sequence is Alpha-amylase inhibitor BDAI-1 (152 aa).

Residues 1-30 form the signal peptide; sequence MGAMWMKSMLLVLLLCMLMVTPMTGARSDN.

The protein belongs to the protease inhibitor I6 (cereal trypsin/alpha-amylase inhibitor) family. In terms of assembly, homodimer. Post-translationally, five disulfide bonds, which are essential for the inhibitor activity, are probably present. As to expression, endosperm.

The protein localises to the secreted. Functionally, could be involved in insect defense mechanisms. Inhibits insect-type alpha-amylase. The sequence is that of Alpha-amylase inhibitor BDAI-1 (IAD1) from Hordeum vulgare (Barley).